Here is a 357-residue protein sequence, read N- to C-terminus: Carbamoyl phosphate synthase small chain (357 aa).

The interval 1-168 (MSKRLLILED…STATAYPSPN (168 aa)) is CPSase. Ser-46, Gly-220, and Gly-222 together coordinate L-glutamine. One can recognise a Glutamine amidotransferase type-1 domain in the interval 172–357 (KVVVVDFGLK…FMDLMDNFKK (186 aa)). Catalysis depends on Cys-247, which acts as the Nucleophile. The L-glutamine site is built by Leu-248, Gln-251, Asn-289, Gly-291, and Tyr-292. Catalysis depends on residues His-331 and Asp-333.

It belongs to the CarA family. Composed of two chains; the small (or glutamine) chain promotes the hydrolysis of glutamine to ammonia, which is used by the large (or ammonia) chain to synthesize carbamoyl phosphate. Tetramer of heterodimers (alpha,beta)4.

It carries out the reaction hydrogencarbonate + L-glutamine + 2 ATP + H2O = carbamoyl phosphate + L-glutamate + 2 ADP + phosphate + 2 H(+). It catalyses the reaction L-glutamine + H2O = L-glutamate + NH4(+). It participates in amino-acid biosynthesis; L-arginine biosynthesis; carbamoyl phosphate from bicarbonate: step 1/1. It functions in the pathway pyrimidine metabolism; UMP biosynthesis via de novo pathway; (S)-dihydroorotate from bicarbonate: step 1/3. Its function is as follows. Small subunit of the glutamine-dependent carbamoyl phosphate synthetase (CPSase). CPSase catalyzes the formation of carbamoyl phosphate from the ammonia moiety of glutamine, carbonate, and phosphate donated by ATP, constituting the first step of 2 biosynthetic pathways, one leading to arginine and/or urea and the other to pyrimidine nucleotides. The small subunit (glutamine amidotransferase) binds and cleaves glutamine to supply the large subunit with the substrate ammonia. The sequence is that of Carbamoyl phosphate synthase small chain from Lactococcus lactis subsp. cremoris (strain MG1363).